The chain runs to 291 residues: 33 kDa chaperonin (291 aa).

2 disulfide bridges follow: C237-C239 and C270-C273.

This sequence belongs to the HSP33 family. Post-translationally, under oxidizing conditions two disulfide bonds are formed involving the reactive cysteines. Under reducing conditions zinc is bound to the reactive cysteines and the protein is inactive.

It is found in the cytoplasm. Functionally, redox regulated molecular chaperone. Protects both thermally unfolding and oxidatively damaged proteins from irreversible aggregation. Plays an important role in the bacterial defense system toward oxidative stress. This is 33 kDa chaperonin from Bacillus anthracis (strain A0248).